The following is a 313-amino-acid chain: Probable cell division protein WhiA (313 aa).

Positions 278 to 311 (SLKELGKLLDPPLSKSGVNHRLRRIKSIANEIRG) form a DNA-binding region, H-T-H motif.

Belongs to the WhiA family.

Functionally, involved in cell division and chromosome segregation. In Halothermothrix orenii (strain H 168 / OCM 544 / DSM 9562), this protein is Probable cell division protein WhiA.